The primary structure comprises 165 residues: Large ribosomal subunit protein uL11A (165 aa).

Arg-67 is subject to N5-methylarginine.

The protein belongs to the universal ribosomal protein uL11 family. In terms of assembly, component of the large ribosomal subunit (LSU). Mature yeast ribosomes consist of a small (40S) and a large (60S) subunit. The 40S small subunit contains 1 molecule of ribosomal RNA (18S rRNA) and at least 33 different proteins. The large 60S subunit contains 3 rRNA molecules (25S, 5.8S and 5S rRNA) and at least 46 different proteins.

The protein resides in the cytoplasm. It is found in the nucleus. It localises to the nucleolus. Its function is as follows. This protein binds directly to 26S ribosomal RNA. In terms of biological role, component of the ribosome, a large ribonucleoprotein complex responsible for the synthesis of proteins in the cell. The small ribosomal subunit (SSU) binds messenger RNAs (mRNAs) and translates the encoded message by selecting cognate aminoacyl-transfer RNA (tRNA) molecules. The large subunit (LSU) contains the ribosomal catalytic site termed the peptidyl transferase center (PTC), which catalyzes the formation of peptide bonds, thereby polymerizing the amino acids delivered by tRNAs into a polypeptide chain. The nascent polypeptides leave the ribosome through a tunnel in the LSU and interact with protein factors that function in enzymatic processing, targeting, and the membrane insertion of nascent chains at the exit of the ribosomal tunnel. The protein is Large ribosomal subunit protein uL11A (rpl1201) of Schizosaccharomyces pombe (strain 972 / ATCC 24843) (Fission yeast).